Reading from the N-terminus, the 737-residue chain is FYVE, RhoGEF and PH domain-containing protein 3 (737 aa).

The disordered stretch occupies residues methionine 1 to glutamine 151. Positions alanine 126 to serine 136 are enriched in acidic residues. Position 128 is a phosphoserine (serine 128). The DH domain maps to lysine 157–alanine 341. Residues glutamate 370–glutamate 469 form the PH 1 domain. The disordered stretch occupies residues glutamine 487–lysine 533. Over residues threonine 500 to glutamate 512 the composition is skewed to low complexity. Residues glutamate 521–lysine 533 show a composition bias toward basic and acidic residues. The segment at aspartate 532–proline 588 adopts an FYVE-type zinc-finger fold. Positions 538, 541, 555, 558, 563, 566, 580, and 583 each coordinate Zn(2+). 2 disordered regions span residues valine 589 to cysteine 620 and alanine 713 to proline 737. The PH 2 domain occupies proline 616–arginine 715.

The protein localises to the cytoplasm. Its subcellular location is the cytoskeleton. Its function is as follows. Promotes the formation of filopodia. May activate CDC42, a member of the Ras-like family of Rho- and Rac proteins, by exchanging bound GDP for free GTP. Plays a role in regulating the actin cytoskeleton and cell shape. This chain is FYVE, RhoGEF and PH domain-containing protein 3 (FGD3), found in Pongo abelii (Sumatran orangutan).